The primary structure comprises 534 residues: Solute carrier family 22 member 15 (534 aa).

Residues 22-42 form a helical membrane-spanning segment; that stretch reads FLLAVLLQLYSATEAIIITIL. N-linked (GlcNAc...) asparagine glycans are attached at residues N52, N58, and N83. A run of 11 helical transmembrane segments spans residues 97–117, 136–156, 161–181, 191–211, 216–236, 297–317, 327–347, 356–376, 391–411, 424–444, and 450–470; these read AAYEVSVSSSVYFGGVLIGVI, LALEVVFAVMNALTPIFPLFL, LVGVMNGGMSLVAFVLLNECI, SLGSLCFAVGIAQFALIGYFI, LLALLVNVQGAAVLALSLCIP, TLIMMWVWFVCSLVYYGLTLS, LNLALSGLAELPAYPLCMYLI, GSLAGFLCVGGGACLLIMLVP, TLSLLGKLNISAAFNIVYIYS, MGVCSMFSRIGGIIAPFIPAL, and ALPFIVFGAAGVSAGLLSLLL. N-linked (GlcNAc...) asparagine glycosylation is present at N513.

The protein belongs to the major facilitator (TC 2.A.1) superfamily. Organic cation transporter (TC 2.A.1.19) family.

The protein resides in the membrane. In terms of biological role, probably transports organic cations. The protein is Solute carrier family 22 member 15 (slc22a15) of Xenopus tropicalis (Western clawed frog).